Consider the following 347-residue polypeptide: Elongation factor Ts (347 aa).

The interval 80–83 (TDFV) is involved in Mg(2+) ion dislocation from EF-Tu.

This sequence belongs to the EF-Ts family.

It is found in the cytoplasm. Associates with the EF-Tu.GDP complex and induces the exchange of GDP to GTP. It remains bound to the aminoacyl-tRNA.EF-Tu.GTP complex up to the GTP hydrolysis stage on the ribosome. In Streptococcus sanguinis (strain SK36), this protein is Elongation factor Ts.